The following is a 302-amino-acid chain: Glycine--tRNA ligase alpha subunit (302 aa).

The protein belongs to the class-II aminoacyl-tRNA synthetase family. In terms of assembly, tetramer of two alpha and two beta subunits.

The protein localises to the cytoplasm. The catalysed reaction is tRNA(Gly) + glycine + ATP = glycyl-tRNA(Gly) + AMP + diphosphate. The polypeptide is Glycine--tRNA ligase alpha subunit (Xanthomonas campestris pv. campestris (strain 8004)).